Reading from the N-terminus, the 199-residue chain is NAD(P)H dehydrogenase (quinone) (199 aa).

The region spanning 4–190 is the Flavodoxin-like domain; the sequence is VLVLYYSAYG…DGARFQGKRV (187 aa). Residues 10–15 and 78–80 each bind FMN; these read SAYGHM and TRY. Residue Y12 participates in NAD(+) binding. A substrate-binding site is contributed by W98. FMN is bound by residues 113 to 119 and H134; that span reads STATQHG. Residues 157-185 form a disordered region; that stretch reads GGAPYGMTTTADGDGSRQPSEQELDGARF. The segment covering 163–177 has biased composition (polar residues); it reads MTTTADGDGSRQPSE.

Belongs to the WrbA family. FMN is required as a cofactor.

It carries out the reaction a quinone + NADH + H(+) = a quinol + NAD(+). It catalyses the reaction a quinone + NADPH + H(+) = a quinol + NADP(+). This chain is NAD(P)H dehydrogenase (quinone), found in Brucella anthropi (strain ATCC 49188 / DSM 6882 / CCUG 24695 / JCM 21032 / LMG 3331 / NBRC 15819 / NCTC 12168 / Alc 37) (Ochrobactrum anthropi).